Consider the following 510-residue polypeptide: MSAKKPMALVILDGWGYREDNANNAINNARTPVMDSLMANNPHTLISASGMDVGLPDGQMGNSEVGHTNIGAGRIVYQDLTRITKAIMDGEFQHNKVLVAAIDKAVAAGKAVHLMGLMSPGGVHSHEDHIYAAVEMAAARGAEKIYLHCFLDGRDTPPRSAEASLKRFQDLFAKLGKGRIASIVGRYYAMDRDNNWDRVEKAYDLLTLAQGEFTYDSAVEALQAAYAREENDEFVKATEIRAAGQESAAMQDGDALLFMNYRADRARQITRTFVPDFAGFSRKAFPALDFVMLTQYAADIPLQCAFGPASLENTYGEWLSKAGKTQLRISETEKYAHVTFFFNGGVENEFPGEERQLVASPKVATYDLQPEMSSKELTDKLVAAIKSGKYDAIICNYPNGDMVGHTGVYEAAVKACEAVDECIGRVVEAIKEVDGQLLITADHGNAEMMIDPETGGVHTAHTSLPVPLIYVGNKAISLKEGGKLSDLAPTMLALSDLDIPADMSGQVLYS.

Positions 13 and 63 each coordinate Mn(2+). Residue Ser63 is the Phosphoserine intermediate of the active site. Residues His124, 154–155 (RD), Arg186, Arg192, 262–265 (RADR), and Lys334 contribute to the substrate site. Mn(2+) is bound by residues Asp401, His405, Asp442, His443, and His461.

It belongs to the BPG-independent phosphoglycerate mutase family. As to quaternary structure, monomer. The cofactor is Mn(2+).

It catalyses the reaction (2R)-2-phosphoglycerate = (2R)-3-phosphoglycerate. The protein operates within carbohydrate degradation; glycolysis; pyruvate from D-glyceraldehyde 3-phosphate: step 3/5. Catalyzes the interconversion of 2-phosphoglycerate and 3-phosphoglycerate. The polypeptide is 2,3-bisphosphoglycerate-independent phosphoglycerate mutase (Vibrio cholerae serotype O1 (strain ATCC 39541 / Classical Ogawa 395 / O395)).